Here is a 188-residue protein sequence, read N- to C-terminus: Elongation factor P (188 aa).

Belongs to the elongation factor P family.

The protein resides in the cytoplasm. It participates in protein biosynthesis; polypeptide chain elongation. Involved in peptide bond synthesis. Stimulates efficient translation and peptide-bond synthesis on native or reconstituted 70S ribosomes in vitro. Probably functions indirectly by altering the affinity of the ribosome for aminoacyl-tRNA, thus increasing their reactivity as acceptors for peptidyl transferase. The polypeptide is Elongation factor P (Bradyrhizobium sp. (strain BTAi1 / ATCC BAA-1182)).